Consider the following 394-residue polypeptide: Keratin, type I cuticular Ha4 (394 aa).

Positions 1-56 (MSYSCCLPSLGCRTSCSSRPCVPPSCHGYTLPGACNIPANVSNCNWFCEGSFNGSE) are head. The IF rod domain occupies 56 to 367 (EKETMQFLND…SLLESEDCKL (312 aa)). The interval 57-91 (KETMQFLNDRLASYLEKVRQLERDNAELEKLIQER) is coil 1A. Residues 92–102 (SQQQEPLLCPS) form a linker 1 region. A coil 1B region spans residues 103–203 (YQSYFKTIEE…HEEEVNTLRS (101 aa)). Positions 204–219 (QLGDRLNVEVDTAPTV) are linker 12. The interval 220-363 (DLNQVLNETR…NTYRSLLESE (144 aa)) is coil 2. Residues 364–394 (DCKLPCNPCATTNASGNSCGPCGTSQKGCCN) are tail.

The protein belongs to the intermediate filament family. In terms of tissue distribution, expressed in the hair follicles.

In Homo sapiens (Human), this protein is Keratin, type I cuticular Ha4 (KRT34).